A 1273-amino-acid chain; its full sequence is Homeobox protein cut-like ceh-44 (1273 aa).

Coiled coils occupy residues 101-407 and 440-468; these read LLKG…DGFK and RQKN…KFED. DNA-binding regions (CUT) lie at residues 591 to 681, 832 to 919, and 978 to 1065; these read NVQA…LSPR, QAQY…KQPK, and IDES…KEES. Positions 1069 to 1100 are disordered; sequence VKAKIESVPAPREAPRPVKRKHSSDTDDYDLN. The homeobox DNA-binding region spans 1103 to 1162; the sequence is KPIQRTVITDYQKDTLRFVFVNEQHPSNELCEQISLKLDMSLRTVQNWFHNHRTRSKARE.

The protein belongs to the CUT homeobox family.

The protein resides in the nucleus. Functionally, probable DNA-binding regulatory protein involved in cell-fate specification. In Caenorhabditis elegans, this protein is Homeobox protein cut-like ceh-44.